A 109-amino-acid chain; its full sequence is Large ribosomal subunit protein uL22 (109 aa).

Belongs to the universal ribosomal protein uL22 family. In terms of assembly, part of the 50S ribosomal subunit.

In terms of biological role, this protein binds specifically to 23S rRNA; its binding is stimulated by other ribosomal proteins, e.g. L4, L17, and L20. It is important during the early stages of 50S assembly. It makes multiple contacts with different domains of the 23S rRNA in the assembled 50S subunit and ribosome. Functionally, the globular domain of the protein is located near the polypeptide exit tunnel on the outside of the subunit, while an extended beta-hairpin is found that lines the wall of the exit tunnel in the center of the 70S ribosome. The protein is Large ribosomal subunit protein uL22 of Bordetella avium (strain 197N).